A 469-amino-acid polypeptide reads, in one-letter code: Pancreatic lipase-related protein 2 (469 aa).

An N-terminal signal peptide occupies residues 1-17 (MLPPWTLGLLLLATVRG). Residues Cys-21 and Cys-27 are joined by a disulfide bond. The interval 93 to 105 (IHGFLDKAEDSWP) is required for galactolipase activity. Cys-109 and Cys-120 are joined by a disulfide. The active-site Nucleophile is Ser-171. The active-site Charge relay system is the Asp-195. Positions 206, 209, 211, and 214 each coordinate Ca(2+). Cys-256 and Cys-280 form a disulfide bridge. The tract at residues 257–279 (KKNVLSTITDIDGIWEGIGGFVS) is required for galactolipase activity. The active-site Charge relay system is His-282. 2 cysteine pairs are disulfide-bonded: Cys-304–Cys-315 and Cys-318–Cys-323. 2 N-linked (GlcNAc...) asparagine glycosylation sites follow: Asn-353 and Asn-428. One can recognise a PLAT domain in the interval 357–469 (WRYKISVTLS…ENVLQSLYPC (113 aa)). An intrachain disulfide couples Cys-453 to Cys-469.

Belongs to the AB hydrolase superfamily. Lipase family. As to expression, pancreas.

Its subcellular location is the secreted. The protein localises to the zymogen granule membrane. The protein resides in the cell projection. It localises to the neuron projection. The enzyme catalyses a triacylglycerol + H2O = a diacylglycerol + a fatty acid + H(+). The catalysed reaction is a 1,2-diacyl-3-O-(beta-D-galactosyl)-sn-glycerol + 2 H2O = 3-beta-D-galactosyl-sn-glycerol + 2 a fatty acid + 2 H(+). It catalyses the reaction 1,2,3-tri-(9Z-octadecenoyl)-glycerol + H2O = di-(9Z)-octadecenoylglycerol + (9Z)-octadecenoate + H(+). It carries out the reaction di-(9Z)-octadecenoylglycerol + H2O = (9Z-octadecenoyl)-glycerol + (9Z)-octadecenoate + H(+). The enzyme catalyses (9Z-octadecenoyl)-glycerol + H2O = glycerol + (9Z)-octadecenoate + H(+). The catalysed reaction is 1-(9Z-octadecenoyl)-glycerol + H2O = glycerol + (9Z)-octadecenoate + H(+). It catalyses the reaction 1,2,3-tripropanoylglycerol + H2O = dipropanoylglycerol + propanoate + H(+). It carries out the reaction 1,2,3-tributanoylglycerol + H2O = dibutanoylglycerol + butanoate + H(+). The enzyme catalyses 1,2,3-trioctanoylglycerol + H2O = dioctanoylglycerol + octanoate + H(+). The catalysed reaction is 1,2-didecanoylglycerol + H2O = decanoylglycerol + decanoate + H(+). It catalyses the reaction long chain 1,2-diacyl-3-O-beta-D-galactosyl-sn-glycerol + H2O = long chain acyl-3-O-beta-D-galactosyl-sn-glycerol + a fatty acid + H(+). It carries out the reaction 1,2-dioctanoyl-3-O-beta-D-galactosyl-sn-glycerol + H2O = octanoyl-3-(beta-D-galactosyl)-sn-glycerol + octanoate + H(+). The enzyme catalyses 1,2-didodecanoyl-3-beta-D-galactosyl-sn-glycerol + H2O = dodecanoyl-3-beta-D-galactosyl-sn-glycerol + dodecanoate + H(+). The catalysed reaction is 1-beta-D-galactosyl-2,3-didodecanoyl-sn-glycerol + H2O = 1-beta-D-galactosyl-dodecanoyl-sn-glycerol + dodecanoate + H(+). It catalyses the reaction a 1,2-diacyl-3-O-[alpha-D-galactosyl-(1-&gt;6)-beta-D-galactosyl]-sn-glycerol + H2O = acyl-3-O-[alpha-D-galactosyl-(1-&gt;6)-beta-D-galactosyl]-sn-glycerol + a fatty acid + H(+). It carries out the reaction long chain 1,2-diacyl-3-O-[alpha-D-galactosyl-(1-&gt;6)-beta-D-galactosyl]-sn-glycerol + H2O = long chain acyl-3-O-[alpha-D-galactosyl-(1-&gt;6)-beta-D-galactosyl]-sn-glycerol + a fatty acid + H(+). The enzyme catalyses 1,2-dioctanoyl-3-O-[alpha-D-galactosyl-(1-&gt;6)-beta-D-galactosyl]-sn-glycerol + H2O = octanoyl-3-O-[alpha-D-galactosyl-(1-&gt;6)-beta-D-galactosyl]-sn-glycerol + octanoate + H(+). The catalysed reaction is 1,2-didodecanoyl-3-O-[alpha-D-galactosyl-(1-&gt;6)-beta-D-galactosyl]-sn-glycerol + H2O = dodecanoyl-3-O-[alpha-D-galactosyl-(1-&gt;6)-beta-D-galactosyl]-sn-glycerol + dodecanoate + H(+). It catalyses the reaction a 1,2-diacyl-sn-glycero-3-phosphocholine + H2O = a monoacyl-sn-glycero-3-phosphocholine + a fatty acid + H(+). Its pathway is glycerolipid metabolism; triacylglycerol degradation. It functions in the pathway glycolipid metabolism. Regulated by CLPS and bile salts levels ranging 1-5 mM in neonates and 2-30 mM in healthy adults. CLPS stimulates milk fat digestion in the presence of 4 mM bile salts. Triacylglycerol lipase activity toward short- and medium-chain triglycerides is inhibited by increasing concentrations of bile salts and weakly reactivated by CLPS. Optimal triacylglycerol lipase activity is reached at bile salts concentrations ranging from 0.1 to 0.5 mM and then decreases at concentrations higher than 1 mM. Lipase activity toward long-chain glycerolipids is stimulated by CLPS in the presence of 4 mM bile salts. Galactolipase activity is inhibited at high concentrations of bile salts. Triacylglycerol lipase activity is inhibited by anti-obesity drug tetrahydrolipstatin. Functionally, lipase that primarily hydrolyzes triglycerides and galactosylglycerides. In neonates, may play a major role in pancreatic digestion of dietary fats such as milk fat globules enriched in long-chain triglycerides. Hydrolyzes short-, medium- and long-chain fatty acyls in triglycerides without apparent positional specificity. Can completely deacylate triacylglycerols. When the liver matures and bile salt synthesis increases, likely functions mainly as a galactolipase and monoacylglycerol lipase. Hydrolyzes monogalactosyldiglycerols (MGDG) and digalactosyldiacylglycerols (DGDG) present in a plant-based diet, releasing long-chain polyunsaturated fatty acids. Hydrolyzes medium- and long-chain fatty acyls in galactolipids. May act together with LIPF to hydrolyze partially digested triglycerides. Hydrolyzes long-chain monoglycerides with high efficiency. In cytotoxic T cells, contributes to perforin-dependent cell lysis, but is unlikely to mediate direct cytotoxicity. Also has low phospholipase activity. In neurons, required for the localization of the phospholipid 1-oleoyl-2-palmitoyl-PC (OPPC) to neurite tips through acyl chain remodeling of membrane phospholipids. The resulting OPPC-rich lipid membrane domain recruits the t-SNARE protein STX4 by selectively interacting with the STX4 transmembrane domain and this promotes surface expression of the dopamine transporter SLC6A3/DAT at neurite tips by facilitating fusion of SLC6A3-containing transport vesicles with the plasma membrane. The protein is Pancreatic lipase-related protein 2 of Homo sapiens (Human).